A 229-amino-acid polypeptide reads, in one-letter code: Uracil-DNA glycosylase (229 aa).

The Proton acceptor role is filled by Asp64.

The protein belongs to the uracil-DNA glycosylase (UDG) superfamily. UNG family.

It is found in the cytoplasm. The enzyme catalyses Hydrolyzes single-stranded DNA or mismatched double-stranded DNA and polynucleotides, releasing free uracil.. Its function is as follows. Excises uracil residues from the DNA which can arise as a result of misincorporation of dUMP residues by DNA polymerase or due to deamination of cytosine. The chain is Uracil-DNA glycosylase from Geobacillus thermodenitrificans (strain NG80-2).